Here is a 2774-residue protein sequence, read N- to C-terminus: Teneurin-2 (2774 aa).

The Teneurin N-terminal domain occupies 1-375; that stretch reads MDVKDRRHRS…KPSKYCSWKC (375 aa). At 1–379 the chain is on the cytoplasmic side; the sequence is MDVKDRRHRS…YCSWKCAALS (379 aa). Phosphoserine is present on residues serine 90 and serine 124. The disordered stretch occupies residues 111 to 271; sequence TGSDADSDTE…HHHSSANSLN (161 aa). The segment covering 141 to 155 has biased composition (polar residues); the sequence is SSGLSSRENSALTLT. Phosphothreonine is present on threonine 155. Serine 157 is subject to Phosphoserine. The segment covering 159–168 has biased composition (basic and acidic residues); that stretch reads NENKSDDENG. The span at 176–188 shows a compositional bias: low complexity; the sequence is SPSLLPSAQLPSS. The segment covering 202–211 has biased composition (polar residues); sequence DSNTSHQIMD. Residues 229 to 240 are compositionally biased toward low complexity; that stretch reads SGPQQASSSGPP. Residues 380–400 traverse the membrane as a helical segment; sequence AIAAALLLAILLAYFIAMHLL. Over 401–2774 the chain is Extracellular; the sequence is GLNWQLQPAD…FLRQNEMGKR (2374 aa). Asparagine 443 and asparagine 482 each carry an N-linked (GlcNAc...) asparagine glycan. EGF-like domains follow at residues 575 to 603, 598 to 634, 636 to 668, 669 to 701, 702 to 735, 738 to 766, 769 to 797, and 808 to 841; these read DCPR…ADCA, LGAD…AECD, PMNQ…EHCE, EVDC…NCEL, ARVQ…PDCS, VCSV…AACD, VCHP…EHCT, and DGCP…PGCN. 22 disulfides stabilise this stretch: cysteine 576–cysteine 586, cysteine 580–cysteine 591, cysteine 593–cysteine 602, cysteine 611–cysteine 622, cysteine 624–cysteine 633, cysteine 640–cysteine 651, cysteine 645–cysteine 656, cysteine 658–cysteine 667, cysteine 672–cysteine 683, cysteine 677–cysteine 688, cysteine 690–cysteine 699, cysteine 710–cysteine 723, cysteine 725–cysteine 734, cysteine 739–cysteine 749, cysteine 743–cysteine 754, cysteine 756–cysteine 765, cysteine 770–cysteine 780, cysteine 774–cysteine 785, cysteine 787–cysteine 796, cysteine 810–cysteine 820, cysteine 814–cysteine 829, and cysteine 831–cysteine 840. Residues asparagine 925, asparagine 948, and asparagine 1267 are each glycosylated (N-linked (GlcNAc...) asparagine). NHL repeat units lie at residues 1272 to 1316, 1342 to 1386, 1401 to 1452, 1474 to 1501, and 1530 to 1573; these read LELR…VKSL, ARCG…NGII, LSCD…IAGR, LESA…INRL, and CYSG…VSKN. The YD 1 repeat unit spans residues 1583–1602; the sequence is YEAASPGEQELYVFNADGIH. Asparagine 1616 is a glycosylation site (N-linked (GlcNAc...) asparagine). 3 YD repeats span residues 1619-1639, 1682-1701, and 1702-1724; these read YSTD…LKIR, YDGN…WTTF, and YDYD…TSLH. N-linked (GlcNAc...) asparagine glycans are attached at residues asparagine 1712, asparagine 1749, asparagine 1773, asparagine 1807, and asparagine 1892. YD repeat units follow at residues 1895–1914, 1936–1954, 1955–1975, 1982–1999, 2000–2021, 2022–2039, 2042–2062, 2065–2085, 2093–2113, 2119–2136, 2137–2163, 2165–2178, 2179–2202, 2205–2225, 2226–2246, 2248–2268, 2280–2300, and 2302–2322; these read YFFN…ERTD, YLDK…YIFE, YDSS…HSMS, YIRN…VIFD, YSDD…VFYK, YGKL…TAVT, YDET…FSCT, YRKI…EGMV, YHDN…TPLP, YDEI…GVIY, YDIN…IKEV, YEMF…MTVQ, YDSM…TKYT, YDGD…WRYS, YDLN…LMPL, YDLR…DDDG, YNSK…SVQY, and YDGV…LQYF. An N-linked (GlcNAc...) asparagine glycan is attached at asparagine 1993. Asparagine 2197 is a glycosylation site (N-linked (GlcNAc...) asparagine). N-linked (GlcNAc...) asparagine glycosylation is present at asparagine 2337. Residues 2348–2389 form a YD 23 repeat; the sequence is YDLQGHLFAMESSSGEEYYVASDNTGTPLAVFSINGLMIKQL. A glycan (N-linked (GlcNAc...) asparagine) is linked at asparagine 2648.

Belongs to the tenascin family. Teneurin subfamily. In terms of assembly, homodimer; disulfide-linked. Heterodimer with either TENM1 or TENM3. May also form heterodimer with TENM4. Isoform 2 (C-terminal globular domain) interacts with ADGRL1 isoform 2. Post-translationally, derives from the membrane form by proteolytic processing. Derives from the plasma membrane form by proteolytic cleavage and translocates to the nucleus. Homophilic binding of the C-terminal extracellular domain stimulates its proteolytic cleavage and release in the cytoplasmic. Is subjected to rapid degradation by the proteasome pathway. Highly expressed in heart, followed by brain, liver, kidney and fetal brain and weakly expressed in lung and testis. No expression was detected in skeletal muscle, pancreas, spleen, ovary and fetal liver.

It is found in the cell membrane. Its subcellular location is the presynaptic cell membrane. The protein localises to the postsynaptic cell membrane. The protein resides in the endoplasmic reticulum. It localises to the golgi apparatus. It is found in the synapse. Its subcellular location is the cell projection. The protein localises to the dendritic spine. The protein resides in the filopodium. It localises to the growth cone. It is found in the nucleus. Its subcellular location is the PML body. Functionally, involved in neural development, regulating the establishment of proper connectivity within the nervous system. Acts as a ligand of the ADGRL1 and ADGRL3 receptors that are expressed at the surface of adjacent cells. Promotes the formation of filopodia and enlarged growth cone in neuronal cells. Mediates axon guidance and homophilic and heterophilic cell-cell adhesion. May function as a cellular signal transducer. Its function is as follows. Acts as a ligand of the ADGRL1 receptor. Mediates axon guidance and heterophilic cell-cell adhesion. Induces gene transcription inhibition. The protein is Teneurin-2 (TENM2) of Homo sapiens (Human).